Here is a 99-residue protein sequence, read N- to C-terminus: Small ribosomal subunit protein bS20 (99 aa).

The segment covering 1–20 (MASAKPKKKNPRLASGRKRV) has biased composition (basic residues). The segment at 1 to 21 (MASAKPKKKNPRLASGRKRVR) is disordered.

It belongs to the bacterial ribosomal protein bS20 family.

In terms of biological role, binds directly to 16S ribosomal RNA. This chain is Small ribosomal subunit protein bS20, found in Verminephrobacter eiseniae (strain EF01-2).